Here is a 173-residue protein sequence, read N- to C-terminus: Non-classical export protein 2 (173 aa).

Residues 1–10 lie on the Cytoplasmic side of the membrane; the sequence is MLALADNILR. Residues 11–30 form a helical membrane-spanning segment; that stretch reads IINFLFLVISIGLISSLLNT. Residues 31 to 37 lie on the Extracellular side of the membrane; that stretch reads QHRHSSR. A helical membrane pass occupies residues 38–62; the sequence is VNYCMFACAYGIFTDSLYGVFANFI. Topologically, residues 63-75 are cytoplasmic; the sequence is EPLAWPLVLFTLD. A helical transmembrane segment spans residues 76–93; sequence FLNFVFTFTAGTVLAVGI. The Extracellular segment spans residues 94-137; it reads RAHSCNNSSYVDSNKITQGSGTRCRQAQAAVAFLYFSCAIFLAK. Residues 138 to 157 form a helical membrane-spanning segment; the sequence is TLMSVFNMISNGAFGSGSFS. Over 158 to 173 the chain is Cytoplasmic; that stretch reads KRRRTGQVGVPTISQV.

The protein belongs to the NCE102 family.

Its subcellular location is the cell membrane. In terms of biological role, involved in membrane organization. Required for the formation of membrane compartments of CAN1 (MCCs), localization of CAN1 at the MCCs and subsequent invagination of the plasma membrane at the MCCs sites. Involved in eisosome organization and might act as a sensor of sphingolipids that regulates plasma membrane function. Involved in a novel pathway of export of proteins that lack a cleavable signal sequence. It may be an accessory subunit to an essential core component of the non-classical export machinery. Non-classical export pathway also functions as an alternative clearance/detoxification pathway to eliminate damaged material, when the basic repair pathway is not sufficient. The sequence is that of Non-classical export protein 2 (NCE102) from Saccharomyces cerevisiae (strain ATCC 204508 / S288c) (Baker's yeast).